A 90-amino-acid chain; its full sequence is Small ribosomal subunit protein bS18 (90 aa).

This sequence belongs to the bacterial ribosomal protein bS18 family. In terms of assembly, part of the 30S ribosomal subunit. Forms a tight heterodimer with protein bS6.

In terms of biological role, binds as a heterodimer with protein bS6 to the central domain of the 16S rRNA, where it helps stabilize the platform of the 30S subunit. The protein is Small ribosomal subunit protein bS18 of Porphyromonas gingivalis (strain ATCC 33277 / DSM 20709 / CIP 103683 / JCM 12257 / NCTC 11834 / 2561).